The chain runs to 417 residues: D-inositol 3-phosphate glycosyltransferase (417 aa).

His-10 provides a ligand contact to 1D-myo-inositol 3-phosphate. UDP-N-acetyl-alpha-D-glucosamine contacts are provided by residues 16 to 17 (QP) and Gly-24. 1D-myo-inositol 3-phosphate contacts are provided by residues 21–26 (DAGGMN), Lys-79, Tyr-112, Thr-136, and Arg-156. Residues Arg-230, Lys-235, and Gln-296 each coordinate UDP-N-acetyl-alpha-D-glucosamine. 3 residues coordinate Mg(2+): Tyr-305, Arg-306, and Ala-308. The UDP-N-acetyl-alpha-D-glucosamine site is built by Glu-318 and Glu-326. Thr-332 lines the Mg(2+) pocket.

This sequence belongs to the glycosyltransferase group 1 family. MshA subfamily. As to quaternary structure, homodimer.

It carries out the reaction 1D-myo-inositol 3-phosphate + UDP-N-acetyl-alpha-D-glucosamine = 1D-myo-inositol 2-acetamido-2-deoxy-alpha-D-glucopyranoside 3-phosphate + UDP + H(+). Its function is as follows. Catalyzes the transfer of a N-acetyl-glucosamine moiety to 1D-myo-inositol 3-phosphate to produce 1D-myo-inositol 2-acetamido-2-deoxy-glucopyranoside 3-phosphate in the mycothiol biosynthesis pathway. The polypeptide is D-inositol 3-phosphate glycosyltransferase (Actinosynnema mirum (strain ATCC 29888 / DSM 43827 / JCM 3225 / NBRC 14064 / NCIMB 13271 / NRRL B-12336 / IMRU 3971 / 101)).